The chain runs to 280 residues: Ribulose-phosphate 3-epimerase, chloroplastic (280 aa).

The transit peptide at serine 1 to alanine 45 directs the protein to the chloroplast. Serine 62 contacts substrate. Positions 87, 89, and 120 each coordinate a divalent metal cation. Aspartate 89 acts as the Proton acceptor in catalysis. Substrate-binding positions include histidine 120, glycine 198–glycine 201, aspartate 231–glycine 233, and glycine 253–serine 254. Residue aspartate 231 coordinates a divalent metal cation. The active-site Proton donor is aspartate 231.

Belongs to the ribulose-phosphate 3-epimerase family. As to quaternary structure, homohexamer. Requires Co(2+) as cofactor. The cofactor is Fe(2+). Mn(2+) serves as cofactor. It depends on Zn(2+) as a cofactor. In terms of tissue distribution, highest level of expression in leaves, whereas it is low in roots, tubers, and stems.

The protein resides in the plastid. Its subcellular location is the chloroplast thylakoid membrane. The catalysed reaction is D-ribulose 5-phosphate = D-xylulose 5-phosphate. The protein operates within carbohydrate biosynthesis; Calvin cycle. Functionally, catalyzes the reversible epimerization of D-ribulose 5-phosphate to D-xylulose 5-phosphate. This Solanum tuberosum (Potato) protein is Ribulose-phosphate 3-epimerase, chloroplastic.